A 103-amino-acid polypeptide reads, in one-letter code: Large ribosomal subunit protein bL21 (103 aa).

The protein belongs to the bacterial ribosomal protein bL21 family. Part of the 50S ribosomal subunit. Contacts protein L20.

This protein binds to 23S rRNA in the presence of protein L20. The sequence is that of Large ribosomal subunit protein bL21 from Clostridium acetobutylicum (strain ATCC 824 / DSM 792 / JCM 1419 / IAM 19013 / LMG 5710 / NBRC 13948 / NRRL B-527 / VKM B-1787 / 2291 / W).